A 1033-amino-acid chain; its full sequence is SIT4-associating protein SAP190 (1033 aa).

3 disordered regions span residues 32–82 (DQDD…TTES), 147–213 (PEII…QVET), and 768–1033 (FGND…KEAF). Residues 158 to 170 (ILIERDRKDKKED) are compositionally biased toward basic and acidic residues. Positions 171–182 (AEEGGDSEETTN) are enriched in acidic residues. Residues 183–195 (DSDHDSGDERSVD) are compositionally biased toward basic and acidic residues. A Phosphoserine modification is found at S774. Acidic residues-rich tracts occupy residues 784–793 (SEDIIGDTEG) and 825–838 (ENEENEEDYAEYSD). Phosphoserine is present on residues S857, S862, and S892. A compositionally biased stretch (basic and acidic residues) spans 858–879 (DDGKSKSAESEFTDKISEHRDG). The segment covering 909 to 924 (SRSQPSDPKLQDQNIF) has biased composition (polar residues). Residues 932-944 (GVGDDDDYMDPND) are compositionally biased toward acidic residues. T990 carries the post-translational modification Phosphothreonine. S991 is modified (phosphoserine). A compositionally biased stretch (acidic residues) spans 1000–1018 (ISSDEEDSEDEDEENDMGN).

This sequence belongs to the SAPS family. In terms of assembly, associates with the SIT4 protein phosphatase catalytic subunit in a cell-cycle-dependent manner. Hyperphosphorylated in the absence of SIT4.

The protein resides in the cytoplasm. Functionally, positive regulator of protein phosphatase SIT4. Involved in the general amino acid control (GAAC) response regulated by TOR. Involved in the dephosphorylation of the elongator complex subunit IKI3. This chain is SIT4-associating protein SAP190 (SAP190), found in Saccharomyces cerevisiae (strain ATCC 204508 / S288c) (Baker's yeast).